A 223-amino-acid polypeptide reads, in one-letter code: Ribonuclease T (223 aa).

The 175-residue stretch at 20–194 folds into the Exonuclease domain; it reads VVIDVETAGF…YDTERTAELF (175 aa). Mg(2+)-binding residues include aspartate 23, glutamate 25, histidine 181, and aspartate 186. Residue histidine 181 is the Proton donor/acceptor of the active site.

Belongs to the RNase T family. Homodimer. Requires Mg(2+) as cofactor.

Functionally, trims short 3' overhangs of a variety of RNA species, leaving a one or two nucleotide 3' overhang. Responsible for the end-turnover of tRNA: specifically removes the terminal AMP residue from uncharged tRNA (tRNA-C-C-A). Also appears to be involved in tRNA biosynthesis. This Shewanella baltica (strain OS185) protein is Ribonuclease T.